Reading from the N-terminus, the 263-residue chain is Mediator of RNA polymerase II transcription subunit 6 (263 aa).

The segment at 159-205 (NSIHGSSSKPSQSSAVSKPSSTNTGTNATTTPITLTTPSGATVPSTV) is disordered. The segment covering 164–200 (SSSKPSQSSAVSKPSSTNTGTNATTTPITLTTPSGAT) has biased composition (low complexity).

Belongs to the Mediator complex subunit 6 family. Component of the Mediator complex.

The protein resides in the nucleus. In terms of biological role, component of the Mediator complex, a coactivator involved in the regulated transcription of nearly all RNA polymerase II-dependent genes. Mediator functions as a bridge to convey information from gene-specific regulatory proteins to the basal RNA polymerase II transcription machinery. Mediator is recruited to promoters by direct interactions with regulatory proteins and serves as a scaffold for the assembly of a functional preinitiation complex with RNA polymerase II and the general transcription factors. The chain is Mediator of RNA polymerase II transcription subunit 6 (MED6) from Candida albicans (strain SC5314 / ATCC MYA-2876) (Yeast).